The chain runs to 216 residues: Dimethylamine corrinoid protein 1 (216 aa).

The B12-binding N-terminal domain maps to 1-91 (MTSKEELLQE…DMPAGTETKK (91 aa)). The 125-residue stretch at 92 to 216 (LGVIVNGTVE…AKAKELLVGK (125 aa)) folds into the B12-binding domain. A methylcob(III)alamin-binding site is contributed by His105.

It belongs to the methylamine corrinoid protein family.

It functions in the pathway one-carbon metabolism; methanogenesis from dimethylamine. Functionally, acts as a methyl group carrier between MtbB and MtbA. The protein is Dimethylamine corrinoid protein 1 (mtbC1) of Methanosarcina mazei (strain ATCC BAA-159 / DSM 3647 / Goe1 / Go1 / JCM 11833 / OCM 88) (Methanosarcina frisia).